A 371-amino-acid chain; its full sequence is Alanine dehydrogenase (371 aa).

Arg-15 and Lys-75 together coordinate substrate. Catalysis depends on His-96, which acts as the Proton donor/acceptor. NAD(+) contacts are provided by residues Ser-134, 178-179, Asp-198, Ser-220, 239-240, 267-270, Arg-279, and 298-301; these read TA, VL, IAID, and VANM. Asp-270 (proton donor/acceptor) is an active-site residue.

This sequence belongs to the AlaDH/PNT family. As to quaternary structure, homohexamer. Trimer of dimers.

The protein localises to the cytoplasm. The enzyme catalyses L-alanine + NAD(+) + H2O = pyruvate + NH4(+) + NADH + H(+). It functions in the pathway amino-acid degradation; L-alanine degradation via dehydrogenase pathway; NH(3) and pyruvate from L-alanine: step 1/1. Functionally, catalyzes the reversible reductive amination of pyruvate to L-alanine. Required for proficient utilization of D- or L-alanine as a nitrogen source. May be required for the adaptation from aerobic growth to anaerobic dormancy. It could be involved in the maintenance of the NAD pool during the shift to an anaerobic dormant state in which oxygen as a terminal electron acceptor becomes limiting. In Mycolicibacterium smegmatis (strain ATCC 700084 / mc(2)155) (Mycobacterium smegmatis), this protein is Alanine dehydrogenase.